A 1081-amino-acid chain; its full sequence is Teashirt homolog 3 (1081 aa).

Disordered regions lie at residues 141–161 (PSSE…SSCG) and 238–257 (HYRD…WSKP). Residues 148-161 (GSSSSSSSSSSSCG) are compositionally biased toward low complexity. 2 C2H2-type zinc fingers span residues 214–238 (FRCK…ETGH) and 275–299 (LKCM…KTKH). A compositionally biased stretch (basic and acidic residues) spans 238 to 247 (HYRDDNHETD). The interval 325 to 364 (SLELELPSSPDSTGGTPKATISDTNDALQKNSNPYITPNN) is disordered. The segment covering 335–364 (DSTGGTPKATISDTNDALQKNSNPYITPNN) has biased composition (polar residues). A C2H2-type 3; atypical zinc finger spans residues 386 to 404 (LKCMECGSSHDTLQELTAH). The span at 473 to 491 (EVDKEKAVTDEKPKQKDKP) shows a compositional bias: basic and acidic residues. 4 disordered regions span residues 473 to 502 (EVDK…DISS), 579 to 604 (NSEI…PMPK), 626 to 687 (EKMK…LAEP), and 855 to 897 (TESH…RQSN). The segment covering 581-603 (EIVSPTKNQTLVSPPSSQTSPMP) has biased composition (polar residues). The stretch at 606-630 (NFHAMEELVKKVTEKVAKVEEKMKE) forms a coiled coil. Position 682 is a phosphoserine (S682). Residues 856–869 (ESHTSKSSTPSSIS) show a composition bias toward low complexity. A DNA-binding region (homeobox; atypical) is located at residues 891 to 961 (RKGRQSNWNP…NVKYQLRRTG (71 aa)). 2 consecutive C2H2-type zinc fingers follow at residues 976–998 (FFCN…LESH) and 1041–1064 (YQCK…SKTH).

This sequence belongs to the teashirt C2H2-type zinc-finger protein family. Interacts (via homeobox domain) with APBB1 (via PID domain 1). Interacts (via N-terminus) with HDAC1 and HDAC2; the interaction is direct. Found in a trimeric complex with APBB1 and HDAC1; the interaction between HDAC1 and APBB1 is mediated by TSHZ3. In terms of tissue distribution, expressed in brain; strongly reduced in post-mortem elderly subjects with Alzheimer disease. Expressed in the fetal neocortex.

It localises to the nucleus. It is found in the cell projection. The protein resides in the growth cone. Its function is as follows. Transcriptional regulator involved in developmental processes. Functions in association with APBB1, SET and HDAC factors as a transcriptional repressor, that inhibits the expression of CASP4. TSHZ3-mediated transcription repression involves the recruitment of histone deacetylases HDAC1 and HDAC2. Associates with chromatin in a region surrounding the CASP4 transcriptional start site(s). Regulates the development of neurons involved in both respiratory rhythm and airflow control. Promotes maintenance of nucleus ambiguus (nA) motoneurons, which govern upper airway function, and establishes a respiratory rhythm generator (RRG) activity compatible with survival at birth. Involved in the differentiation of the proximal uretic smooth muscle cells during developmental processes. Involved in the up-regulation of myocardin, that directs the expression of smooth muscle cells in the proximal ureter. Involved in the modulation of glutamatergic synaptic transmission and long-term synaptic potentiation. In Homo sapiens (Human), this protein is Teashirt homolog 3 (TSHZ3).